A 100-amino-acid polypeptide reads, in one-letter code: Small ribosomal subunit protein uS14c (100 aa).

It belongs to the universal ribosomal protein uS14 family. In terms of assembly, part of the 30S ribosomal subunit.

Its subcellular location is the plastid. The protein resides in the chloroplast. Binds 16S rRNA, required for the assembly of 30S particles. This is Small ribosomal subunit protein uS14c from Euglena gracilis.